The primary structure comprises 141 residues: Hemoglobin subunit alpha-1/2 (141 aa).

Residues 1–141 form the Globin domain; sequence VLSPTDKTNV…VSTVLTSKYR (141 aa). Position 3 is a phosphoserine (Ser-3). Lys-7 carries the post-translational modification N6-succinyllysine. Position 8 is a phosphothreonine (Thr-8). At Lys-11 the chain carries N6-succinyllysine. An N6-acetyllysine; alternate modification is found at Lys-16. N6-succinyllysine; alternate is present on Lys-16. Position 24 is a phosphotyrosine (Tyr-24). Lys-40 carries the post-translational modification N6-succinyllysine. At Ser-49 the chain carries Phosphoserine. Residue His-58 participates in O2 binding. Residue His-87 participates in heme b binding. A Phosphoserine modification is found at Ser-102. Thr-108 is subject to Phosphothreonine. The residue at position 124 (Ser-124) is a Phosphoserine. Phosphothreonine occurs at positions 134 and 137. Ser-138 bears the Phosphoserine mark.

Belongs to the globin family. Heterotetramer of two alpha chains and two beta chains. As to expression, red blood cells.

Functionally, involved in oxygen transport from the lung to the various peripheral tissues. The chain is Hemoglobin subunit alpha-1/2 from Tapirus terrestris (Lowland tapir).